Reading from the N-terminus, the 356-residue chain is DNA integrity scanning protein DisA (356 aa).

A DAC domain is found at 7 to 147 (NKNMLYALKM…EKYVVEDISK (141 aa)). Residues G74, L92, and 105–109 (TRHRT) each bind ATP.

It belongs to the DisA family. As to quaternary structure, homooctamer. Mg(2+) serves as cofactor.

It carries out the reaction 2 ATP = 3',3'-c-di-AMP + 2 diphosphate. Functionally, participates in a DNA-damage check-point that is active prior to asymmetric division when DNA is damaged. DisA forms globular foci that rapidly scan along the chromosomes during sporulation, searching for lesions. When a lesion is present, DisA pauses at the lesion site. This triggers a cellular response that culminates in a temporary block in sporulation initiation. In terms of biological role, also has diadenylate cyclase activity, catalyzing the condensation of 2 ATP molecules into cyclic di-AMP (c-di-AMP). c-di-AMP acts as a signaling molecule that couples DNA integrity with progression of sporulation. The rise in c-di-AMP level generated by DisA while scanning the chromosome, operates as a positive signal that advances sporulation; upon encountering a lesion, the DisA focus arrests at the damaged site and halts c-di-AMP synthesis. This Clostridioides difficile (strain 630) (Peptoclostridium difficile) protein is DNA integrity scanning protein DisA.